A 447-amino-acid chain; its full sequence is Phosphoglucosamine mutase (447 aa).

S100 (phosphoserine intermediate) is an active-site residue. Positions 100, 239, 241, and 243 each coordinate Mg(2+). S100 is subject to Phosphoserine.

This sequence belongs to the phosphohexose mutase family. Requires Mg(2+) as cofactor. Post-translationally, activated by phosphorylation.

It carries out the reaction alpha-D-glucosamine 1-phosphate = D-glucosamine 6-phosphate. Catalyzes the conversion of glucosamine-6-phosphate to glucosamine-1-phosphate. The sequence is that of Phosphoglucosamine mutase from Caldanaerobacter subterraneus subsp. tengcongensis (strain DSM 15242 / JCM 11007 / NBRC 100824 / MB4) (Thermoanaerobacter tengcongensis).